Reading from the N-terminus, the 140-residue chain is Nucleoside diphosphate kinase (140 aa).

6 residues coordinate ATP: K10, F58, R86, T92, R103, and N113. The Pros-phosphohistidine intermediate role is filled by H116.

This sequence belongs to the NDK family. In terms of assembly, homotetramer. Mg(2+) is required as a cofactor.

The protein localises to the cytoplasm. It catalyses the reaction a 2'-deoxyribonucleoside 5'-diphosphate + ATP = a 2'-deoxyribonucleoside 5'-triphosphate + ADP. The enzyme catalyses a ribonucleoside 5'-diphosphate + ATP = a ribonucleoside 5'-triphosphate + ADP. Its function is as follows. Major role in the synthesis of nucleoside triphosphates other than ATP. The ATP gamma phosphate is transferred to the NDP beta phosphate via a ping-pong mechanism, using a phosphorylated active-site intermediate. The sequence is that of Nucleoside diphosphate kinase from Haemophilus influenzae (strain PittEE).